The sequence spans 267 residues: MPKVTKIEVQKKNKERFNLYLDESFEMGIDMDTLVHFNLKKGDVLTAANMEDIQKYEHFRFGLHLAIQYLSYRKRTEQEVVQHLQKHEISESAIAEVIDYCNREGYIDHEDYAESLKNTMIRTTDKGPEIFRQKLIKAGIEKSLVENYTAKYEEEQPLEDVEILADKLLHQKKGPKKKRIDKVKQSLLQKGYSFEVINEAMQNLDFEPDSEEIDLLLQRELEKVFRKYERKYEGRQLEMKTIEALLRKGYEYDTIKDKMRESGIGDE.

Belongs to the RecX family.

The protein resides in the cytoplasm. Its function is as follows. Modulates RecA activity. The polypeptide is Regulatory protein RecX (Staphylococcus carnosus (strain TM300)).